The primary structure comprises 303 residues: Protoheme IX farnesyltransferase (303 aa).

Transmembrane regions (helical) follow at residues 25–45 (MGLVQGNLIPAFAGAWLAIVM), 54–74 (IPQILLMLVGSTLIMGGACAL), 118–138 (CLFLLNIPSGVLGLIGIVGYV), 166–186 (IGWVAIDGSLSLAAVALFLVV), 230–250 (LVLLLPLPFLLSNLGVTFVVI), and 280–300 (FVYSLNYLVVFFALVVVVSLI).

Belongs to the UbiA prenyltransferase family. Protoheme IX farnesyltransferase subfamily. In terms of assembly, interacts with CtaA.

The protein resides in the cell membrane. It catalyses the reaction heme b + (2E,6E)-farnesyl diphosphate + H2O = Fe(II)-heme o + diphosphate. Its pathway is porphyrin-containing compound metabolism; heme O biosynthesis; heme O from protoheme: step 1/1. Functionally, converts heme B (protoheme IX) to heme O by substitution of the vinyl group on carbon 2 of heme B porphyrin ring with a hydroxyethyl farnesyl side group. This is Protoheme IX farnesyltransferase from Staphylococcus epidermidis (strain ATCC 35984 / DSM 28319 / BCRC 17069 / CCUG 31568 / BM 3577 / RP62A).